A 468-amino-acid chain; its full sequence is MKNFMDKNFLLQTETAQELYHNHAAKMPIIDYHCHLNPQMVADDYRFKSLTEIWLGGDHYKWRAMRSNGVDECFCTGKETSDWEKFEKWAETVPYTFRNPLYHWTHLELKTAFGIDKVLNPKTAREIYDECNEKLSSQEYSARGMMRRYHVETVCTTDDPIDSLEYHIRTRESGFEIKMLPTWRPDKVMAVEVPSDFRTYIEKLSEISEITISDYNDMILALRKRHDYFAEQGCKLSDHGIEEFYAEDYTEGEIKTIFNKIYGGSELTKEEVLKFKSAMLIVLGEMDWEKGWTQQFHYGAIRNNNSRMFKQLGPDTGFDSIGEFATAKAMSKFLDRLNSKGKLTKTILYNLNPCANEVIATMIGNFQDGSIPGKIQFGSGWWFLDQKDGMERQLNALSLLGLLSRFVGMLTDSRSFLSYPRHEYFRRTLCNLLGCDVENGEIPLSEMERVCQMVEDISYFNAKNFFHF.

The protein belongs to the metallo-dependent hydrolases superfamily. Uronate isomerase family.

The catalysed reaction is D-glucuronate = D-fructuronate. It catalyses the reaction aldehydo-D-galacturonate = keto-D-tagaturonate. It functions in the pathway carbohydrate metabolism; pentose and glucuronate interconversion. This Bacteroides fragilis (strain ATCC 25285 / DSM 2151 / CCUG 4856 / JCM 11019 / LMG 10263 / NCTC 9343 / Onslow / VPI 2553 / EN-2) protein is Uronate isomerase.